The sequence spans 335 residues: Probable geranylgeranyl transferase type-2 subunit beta (335 aa).

PFTB repeat units lie at residues 74-115 (TEEI…IIFN), 122-163 (ADTI…HLLG), 170-211 (IDSA…AIAG), 218-259 (RDRT…AILG), and 266-312 (SDAM…DDTL). Geranylgeranyl diphosphate is bound by residues 196–198 (HSG) and 238–250 (RPEK…YSWW). Positions 244, 246, and 296 each coordinate Zn(2+).

Belongs to the protein prenyltransferase subunit beta family. In terms of assembly, heterodimer of an alpha and a beta subunit. Requires Zn(2+) as cofactor.

It carries out the reaction geranylgeranyl diphosphate + L-cysteinyl-[protein] = S-geranylgeranyl-L-cysteinyl-[protein] + diphosphate. Catalyzes the transfer of a geranyl-geranyl moiety from geranyl-geranyl pyrophosphate to both cysteines in Rab proteins with an -XXCC, -XCXC and -CCXX C-terminal. The polypeptide is Probable geranylgeranyl transferase type-2 subunit beta (ggtb-1) (Caenorhabditis elegans).